The sequence spans 95 residues: Small ribosomal subunit protein bS6 (95 aa).

The protein belongs to the bacterial ribosomal protein bS6 family.

Its function is as follows. Binds together with bS18 to 16S ribosomal RNA. The polypeptide is Small ribosomal subunit protein bS6 (Clostridium beijerinckii (strain ATCC 51743 / NCIMB 8052) (Clostridium acetobutylicum)).